We begin with the raw amino-acid sequence, 600 residues long: Aspartate--tRNA(Asp/Asn) ligase (600 aa).

Glu174 serves as a coordination point for L-aspartate. The interval 198–201 (QLFK) is aspartate. Arg220 lines the L-aspartate pocket. ATP is bound by residues 220 to 222 (RDE) and Gln229. Position 457 (His457) interacts with L-aspartate. Glu491 is a binding site for ATP. L-aspartate is bound at residue Arg498. 543 to 546 (GLDR) is a binding site for ATP.

This sequence belongs to the class-II aminoacyl-tRNA synthetase family. Type 1 subfamily. As to quaternary structure, homodimer.

The protein localises to the cytoplasm. It catalyses the reaction tRNA(Asx) + L-aspartate + ATP = L-aspartyl-tRNA(Asx) + AMP + diphosphate. Functionally, aspartyl-tRNA synthetase with relaxed tRNA specificity since it is able to aspartylate not only its cognate tRNA(Asp) but also tRNA(Asn). Reaction proceeds in two steps: L-aspartate is first activated by ATP to form Asp-AMP and then transferred to the acceptor end of tRNA(Asp/Asn). The protein is Aspartate--tRNA(Asp/Asn) ligase of Burkholderia lata (strain ATCC 17760 / DSM 23089 / LMG 22485 / NCIMB 9086 / R18194 / 383).